We begin with the raw amino-acid sequence, 96 residues long: MAKGQSLQDPYLNALRRERIPVSIYLVNGIKLQGQIESFDQFVILLKNTVNQMVYKHAISTVVPARSVSHHNNPQQQQQHSQQTESAAPAAEPQAE.

The Sm domain occupies Asp9 to Val68. The segment at Ala65–Glu96 is disordered. Over residues His70 to Glu96 the composition is skewed to low complexity.

This sequence belongs to the Hfq family. In terms of assembly, homohexamer.

In terms of biological role, RNA chaperone that binds small regulatory RNA (sRNAs) and mRNAs to facilitate mRNA translational regulation in response to envelope stress, environmental stress and changes in metabolite concentrations. Also binds with high specificity to tRNAs. This Mannheimia succiniciproducens (strain KCTC 0769BP / MBEL55E) protein is RNA-binding protein Hfq.